We begin with the raw amino-acid sequence, 435 residues long: ATP-dependent protease ATPase subunit HslU (435 aa).

Residues I18, 60–65 (GVGKTE), D248, E313, and R385 contribute to the ATP site.

It belongs to the ClpX chaperone family. HslU subfamily. A double ring-shaped homohexamer of HslV is capped on each side by a ring-shaped HslU homohexamer. The assembly of the HslU/HslV complex is dependent on binding of ATP.

It localises to the cytoplasm. In terms of biological role, ATPase subunit of a proteasome-like degradation complex; this subunit has chaperone activity. The binding of ATP and its subsequent hydrolysis by HslU are essential for unfolding of protein substrates subsequently hydrolyzed by HslV. HslU recognizes the N-terminal part of its protein substrates and unfolds these before they are guided to HslV for hydrolysis. The chain is ATP-dependent protease ATPase subunit HslU from Ruegeria pomeroyi (strain ATCC 700808 / DSM 15171 / DSS-3) (Silicibacter pomeroyi).